Reading from the N-terminus, the 495-residue chain is UDP-glycosyltransferase 1 (495 aa).

The Proton acceptor role is filled by His24. An an anthocyanidin-binding site is contributed by His24. Asp129 (charge relay) is an active-site residue. Gln358, His373, Trp376, Asn377, Ser378, and Glu381 together coordinate UDP-alpha-D-glucose. Gly396 is a binding site for an anthocyanidin. Residues Asp397 and Gln398 each contribute to the UDP-alpha-D-glucose site.

This sequence belongs to the UDP-glycosyltransferase family.

It catalyses the reaction oleanolate + UDP-alpha-D-glucose = oleanolate 3-O-beta-D-glucoside + UDP + H(+). Functionally, catalyzes the transfer of a glucose (Glc) moiety from UDP-Glc to the C-3 position of the oleanane sapogenins oleanolate and hederagenin. The monoglucosylated hederagenin 3-O-beta-D-glucoside is a feeding deterrent of the yellow-striped flea beetle (Phyllotreta nemorum). This chain is UDP-glycosyltransferase 1, found in Barbarea vulgaris (Yellow rocket).